The chain runs to 153 residues: Bursicon (153 aa).

An N-terminal signal peptide occupies residues 1–22 (MLLYHIVGASVLICLLNETAKA). Intrachain disulfides connect Cys-29/Cys-78, Cys-43/Cys-92, Cys-53/Cys-113, Cys-57/Cys-115, and Cys-75/Cys-118. The 91-residue stretch at 29 to 119 (CQATPVIHFL…PLECMCRPCT (91 aa)) folds into the CTCK domain.

Heterodimer of burs and pburs.

Its subcellular location is the secreted. Functionally, final heterodimeric neurohormone released at the end of the molting cycle, involved in the sclerotization (tanning) of the insect cuticle, melanization and wing spreading. The chain is Bursicon from Apis mellifera (Honeybee).